We begin with the raw amino-acid sequence, 244 residues long: uncharacterized protein (244 aa).

Residues 7–74 (VKEKDQVVAH…YHRGAFIERF (68 aa)) enclose the HTH gntR-type domain. A DNA-binding region (H-T-H motif) is located at residues 34–53 (RNEIAHGLGVSRVPIQEALV).

This is an uncharacterized protein from Mycobacterium tuberculosis (strain CDC 1551 / Oshkosh).